The sequence spans 440 residues: uncharacterized protein (440 aa).

Residues 1 to 29 form the signal peptide; sequence MLRLQMMEGLIVKRTLLLILLLVISVSYA.

The protein belongs to the Mj S-layer protein family.

This is an uncharacterized protein from Methanocaldococcus jannaschii (strain ATCC 43067 / DSM 2661 / JAL-1 / JCM 10045 / NBRC 100440) (Methanococcus jannaschii).